Reading from the N-terminus, the 599-residue chain is Sulfite reductase [NADPH] flavoprotein alpha-component (599 aa).

The Flavodoxin-like domain occupies 64-202; that stretch reads ITIISASQTG…AASEWRARVV (139 aa). FMN is bound by residues 70 to 75, 117 to 120, and 153 to 162; these read SQTGNA, STQG, and LGDSSYEFFC. The region spanning 234 to 448 is the FAD-binding FR-type domain; it reads DAPLVASLSV…IEHNDNFRLP (215 aa). Residues threonine 322, alanine 356, 386-389, 404-406, tyrosine 410, and 419-422 each bind FAD; these read RLYS, TVG, and GGAS. Residues 519 to 520, 525 to 529, and aspartate 561 contribute to the NADP(+) site; these read SR and KVYVQ. Residue tyrosine 599 coordinates FAD.

The protein belongs to the NADPH-dependent sulphite reductase flavoprotein subunit CysJ family. It in the N-terminal section; belongs to the flavodoxin family. In the C-terminal section; belongs to the flavoprotein pyridine nucleotide cytochrome reductase family. Alpha(8)-beta(8). The alpha component is a flavoprotein, the beta component is a hemoprotein. The cofactor is FAD. FMN is required as a cofactor.

The catalysed reaction is hydrogen sulfide + 3 NADP(+) + 3 H2O = sulfite + 3 NADPH + 4 H(+). It functions in the pathway sulfur metabolism; hydrogen sulfide biosynthesis; hydrogen sulfide from sulfite (NADPH route): step 1/1. Functionally, component of the sulfite reductase complex that catalyzes the 6-electron reduction of sulfite to sulfide. This is one of several activities required for the biosynthesis of L-cysteine from sulfate. The flavoprotein component catalyzes the electron flow from NADPH -&gt; FAD -&gt; FMN to the hemoprotein component. This Escherichia coli (strain K12) protein is Sulfite reductase [NADPH] flavoprotein alpha-component.